Here is a 221-residue protein sequence, read N- to C-terminus: Max dimerization protein 1 (221 aa).

Residues 21–49 carry the Nuclear localization signal motif; that stretch reads RREREAEHGYASMLPYNNKDRDALKRRNK. Disordered stretches follow at residues 30–68 and 173–204; these read YASM…EKNR and TGDL…YSST. The bHLH domain maps to 56-108; the sequence is SSRSTHNEMEKNRRAHLRLCLEKLKGLVPLGPESSRHTTLSLLTKAKLHIKKL. Residues 175–184 show a composition bias toward low complexity; the sequence is DLDWSSSSVS. Residues 191 to 204 show a composition bias toward polar residues; the sequence is SMQSLGSDEGYSST.

Heterodimer with MAX; the interaction is required for DNA-binding. DNA binding requires dimerization with another bHLH protein; does not form homodimers, and does not bind to DNA in the absence of MAX in vitro. Interacts with RNF17. Post-translationally, ubiquitinated by BIRC2/c-IAP1, leading to its subsequent degradation by the proteasome.

It is found in the nucleus. Component of a transcriptional repressor complex together with MAX. In complex with MAX binds to the core DNA sequence 5'-CAC[GA]TG-3'. Antagonizes MYC transcriptional activity by competing with MYC for MAX binding. Binds to the TERT promoter and represses telomerase expression, possibly by interfering with MYC binding. In Homo sapiens (Human), this protein is Max dimerization protein 1 (MXD1).